Reading from the N-terminus, the 347-residue chain is Zinc-type alcohol dehydrogenase-like protein C16A3.02c (347 aa).

The protein belongs to the zinc-containing alcohol dehydrogenase family. Quinone oxidoreductase subfamily.

It localises to the golgi apparatus. Its subcellular location is the endoplasmic reticulum. In Schizosaccharomyces pombe (strain 972 / ATCC 24843) (Fission yeast), this protein is Zinc-type alcohol dehydrogenase-like protein C16A3.02c.